We begin with the raw amino-acid sequence, 118 residues long: ATP synthase subunit g, mitochondrial (118 aa).

F-type ATP synthases have 2 components, the catalytic core F(1) and the membrane-embedded component F(0), linked together by a central stalk and a peripheral stalk. The central stalk, also called rotor shaft, is often seen as part of F(1). The peripheral stalk is seen as part of F(0). F(0) contains the membrane channel next to the rotor. F-type ATP synthases form dimers but each monomer functions independently in ATP generation. The dimer consists of 18 different polypeptides: ATP1 (subunit alpha, part of F(1), 3 molecules per monomer), ATP2 (subunit beta, part of F(1), 3 molecules per monomer), ATP3 (subunit gamma, part of the central stalk), ATP4 (subunit b, part of the peripheral stalk), ATP5/OSCP (subunit 5/OSCP, part of the peripheral stalk), ATP6 (subunit a, part of the peripheral stalk), ATP7 (subunit d, part of the peripheral stalk), ATP8 (subunit 8, part of the peripheral stalk), OLI1 (subunit c, part of the rotor, 10 molecules per monomer), ATP14 (subunit h, part of the peripheral stalk), ATP15 (subunit epsilon, part of the central stalk), ATP16 (subunit delta, part of the central stalk), ATP17 (subunit f, part of the peripheral stalk), ATP18 (subunit i/j, part of the peripheral stalk). Dimer-specific subunits are ATP19 (subunit k, at interface between monomers), ATP20 (subunit g, at interface between monomers), TIM11 (subunit e, at interface between monomers). Also contains subunit L.

Its subcellular location is the mitochondrion inner membrane. Its function is as follows. Mitochondrial membrane ATP synthase (F(1)F(0) ATP synthase or Complex V) produces ATP from ADP in the presence of a proton gradient across the membrane which is generated by electron transport complexes of the respiratory chain. F-type ATP synthases consist of two structural domains, F(1) - containing the extramembraneous catalytic core, and F(0) - containing the membrane proton channel, linked together by a central stalk and a peripheral stalk. During catalysis, ATP synthesis in the catalytic domain of F(1) is coupled via a rotary mechanism of the central stalk subunits to proton translocation. Part of the complex F(0) domain Minor subunit located with subunit a/ATP6 in the membrane. Together with subunit e/TIM11, probably contributes to membrane curvature at the site of the ATP synthase dimer, ultimately contributing to formation of cristae. The polypeptide is ATP synthase subunit g, mitochondrial (Pichia angusta (Yeast)).